A 296-amino-acid chain; its full sequence is Ribosomal RNA small subunit methyltransferase A (296 aa).

6 residues coordinate S-adenosyl-L-methionine: N32, L34, G59, E80, D105, and N130.

It belongs to the class I-like SAM-binding methyltransferase superfamily. rRNA adenine N(6)-methyltransferase family. RsmA subfamily.

Its subcellular location is the cytoplasm. It catalyses the reaction adenosine(1518)/adenosine(1519) in 16S rRNA + 4 S-adenosyl-L-methionine = N(6)-dimethyladenosine(1518)/N(6)-dimethyladenosine(1519) in 16S rRNA + 4 S-adenosyl-L-homocysteine + 4 H(+). Specifically dimethylates two adjacent adenosines (A1518 and A1519) in the loop of a conserved hairpin near the 3'-end of 16S rRNA in the 30S particle. May play a critical role in biogenesis of 30S subunits. This chain is Ribosomal RNA small subunit methyltransferase A, found in Levilactobacillus brevis (strain ATCC 367 / BCRC 12310 / CIP 105137 / JCM 1170 / LMG 11437 / NCIMB 947 / NCTC 947) (Lactobacillus brevis).